Reading from the N-terminus, the 111-residue chain is Class I hydrophobin 10 (111 aa).

The signal sequence occupies residues 1–17 (MLFNTFVVTALASLAAA). 4 disulfides stabilise this stretch: Cys-30–Cys-90, Cys-37–Cys-84, Cys-38–Cys-71, and Cys-91–Cys-104.

It belongs to the fungal hydrophobin family. Self-assembles to form functional amyloid fibrils called rodlets. Self-assembly into fibrillar rodlets occurs spontaneously at hydrophobic:hydrophilic interfaces and the rodlets further associate laterally to form amphipathic monolayers.

The protein localises to the secreted. It is found in the cell wall. Aerial growth, conidiation, and dispersal of filamentous fungi in the environment rely upon a capability of their secreting small amphipathic proteins called hydrophobins (HPBs) with low sequence identity. Class I can self-assemble into an outermost layer of rodlet bundles on aerial cell surfaces, conferring cellular hydrophobicity that supports fungal growth, development and dispersal; whereas Class II form highly ordered films at water-air interfaces through intermolecular interactions but contribute nothing to the rodlet structure. The polypeptide is Class I hydrophobin 10 (Pleurotus ostreatus (strain PC15) (Oyster mushroom)).